The primary structure comprises 143 residues: Interleukin-4 (143 aa).

The signal sequence occupies residues 1-19 (MGLSPQLAAVLLCLLVCTG). 2 cysteine pairs are disulfide-bonded: cysteine 48–cysteine 88 and cysteine 70–cysteine 115. 2 N-linked (GlcNAc...) asparagine glycosylation sites follow: asparagine 62 and asparagine 91.

It belongs to the IL-4/IL-13 family.

It is found in the secreted. Participates in at least several B-cell activation processes as well as of other cell types. It is a costimulator of DNA-synthesis. It induces the expression of class II MHC molecules on resting B-cells. It enhances both secretion and cell surface expression of IgE and IgG1. It also regulates the expression of the low affinity Fc receptor for IgE (CD23) on both lymphocytes and monocytes. Positively regulates IL31RA expression in macrophages. Stimulates autophagy in dendritic cells by interfering with mTORC1 signaling and through the induction of RUFY4. In Meriones unguiculatus (Mongolian jird), this protein is Interleukin-4 (IL4).